Here is a 217-residue protein sequence, read N- to C-terminus: 3-oxo-tetronate 4-phosphate decarboxylase (217 aa).

His93 and His95 together coordinate Zn(2+). Tyr120 acts as the Proton donor in catalysis.

It belongs to the aldolase class II family. AraD/FucA subfamily. Zn(2+) is required as a cofactor.

The enzyme catalyses 3-dehydro-4-O-phospho-D-erythronate + H(+) = dihydroxyacetone phosphate + CO2. It carries out the reaction 3-dehydro-4-O-phospho-L-erythronate + H(+) = dihydroxyacetone phosphate + CO2. Functionally, catalyzes the decarboxylation of 3-oxo-tetronate 4-phosphate to dihydroxyacetone phosphate (DHAP) and CO(2). This Cupriavidus necator (strain ATCC 17699 / DSM 428 / KCTC 22496 / NCIMB 10442 / H16 / Stanier 337) (Ralstonia eutropha) protein is 3-oxo-tetronate 4-phosphate decarboxylase.